A 433-amino-acid polypeptide reads, in one-letter code: D-amino acid dehydrogenase (433 aa).

Position 3–17 (3–17) interacts with FAD; the sequence is VVILGSGVVGVASAW.

Belongs to the DadA oxidoreductase family. It depends on FAD as a cofactor.

The catalysed reaction is a D-alpha-amino acid + A + H2O = a 2-oxocarboxylate + AH2 + NH4(+). It participates in amino-acid degradation; D-alanine degradation; NH(3) and pyruvate from D-alanine: step 1/1. Functionally, oxidative deamination of D-amino acids. The sequence is that of D-amino acid dehydrogenase from Erwinia tasmaniensis (strain DSM 17950 / CFBP 7177 / CIP 109463 / NCPPB 4357 / Et1/99).